Reading from the N-terminus, the 134-residue chain is Peptide methionine sulfoxide reductase MsrB (134 aa).

The 123-residue stretch at 9–131 (DEYWRDKLDA…NSASIQLQKE (123 aa)) folds into the MsrB domain. The Zn(2+) site is built by Cys48, Cys51, Cys97, and Cys100. Cys120 functions as the Nucleophile in the catalytic mechanism.

Belongs to the MsrB Met sulfoxide reductase family. Zn(2+) is required as a cofactor.

The enzyme catalyses L-methionyl-[protein] + [thioredoxin]-disulfide + H2O = L-methionyl-(R)-S-oxide-[protein] + [thioredoxin]-dithiol. In Saccharophagus degradans (strain 2-40 / ATCC 43961 / DSM 17024), this protein is Peptide methionine sulfoxide reductase MsrB.